We begin with the raw amino-acid sequence, 643 residues long: Phosphomethylpyrimidine synthase (643 aa).

Substrate-binding positions include N221, M250, Y279, H315, 335 to 337, 376 to 379, and E415; these read SRG and DGLR. Zn(2+) is bound at residue H419. Y442 provides a ligand contact to substrate. H483 contributes to the Zn(2+) binding site. C563, C566, and C571 together coordinate [4Fe-4S] cluster.

The protein belongs to the ThiC family. In terms of assembly, homodimer. [4Fe-4S] cluster serves as cofactor.

It catalyses the reaction 5-amino-1-(5-phospho-beta-D-ribosyl)imidazole + S-adenosyl-L-methionine = 4-amino-2-methyl-5-(phosphooxymethyl)pyrimidine + CO + 5'-deoxyadenosine + formate + L-methionine + 3 H(+). Its pathway is cofactor biosynthesis; thiamine diphosphate biosynthesis. Functionally, catalyzes the synthesis of the hydroxymethylpyrimidine phosphate (HMP-P) moiety of thiamine from aminoimidazole ribotide (AIR) in a radical S-adenosyl-L-methionine (SAM)-dependent reaction. The protein is Phosphomethylpyrimidine synthase of Nitrobacter hamburgensis (strain DSM 10229 / NCIMB 13809 / X14).